Reading from the N-terminus, the 190-residue chain is Putative 3-methyladenine DNA glycosylase (190 aa).

It belongs to the DNA glycosylase MPG family.

The polypeptide is Putative 3-methyladenine DNA glycosylase (Deinococcus radiodurans (strain ATCC 13939 / DSM 20539 / JCM 16871 / CCUG 27074 / LMG 4051 / NBRC 15346 / NCIMB 9279 / VKM B-1422 / R1)).